Consider the following 366-residue polypeptide: Ribosomal RNA large subunit methyltransferase M (366 aa).

Residues Ser-188, 221 to 224 (CPGG), Asp-240, Asp-260, and Asp-277 contribute to the S-adenosyl-L-methionine site. Residue Lys-306 is the Proton acceptor of the active site.

This sequence belongs to the class I-like SAM-binding methyltransferase superfamily. RNA methyltransferase RlmE family. RlmM subfamily. As to quaternary structure, monomer.

The protein resides in the cytoplasm. The catalysed reaction is cytidine(2498) in 23S rRNA + S-adenosyl-L-methionine = 2'-O-methylcytidine(2498) in 23S rRNA + S-adenosyl-L-homocysteine + H(+). Its function is as follows. Catalyzes the 2'-O-methylation at nucleotide C2498 in 23S rRNA. This chain is Ribosomal RNA large subunit methyltransferase M, found in Photorhabdus asymbiotica subsp. asymbiotica (strain ATCC 43949 / 3105-77) (Xenorhabdus luminescens (strain 2)).